The chain runs to 389 residues: Gustatory receptor 68a (389 aa).

Residues 1-42 lie on the Cytoplasmic side of the membrane; it reads MKIYQDIYPISKPSQIFAILPFYSGDVDDGFRFGGLGRWYGR. Residues 43 to 63 traverse the membrane as a helical segment; sequence LVALIILIGSLTLGEDVLFAS. The Extracellular segment spans residues 64–82; that stretch reads KEYRLVASAQGDTEEINRT. N-linked (GlcNAc...) asparagine glycosylation occurs at Asn80. The chain crosses the membrane as a helical span at residues 83-103; that stretch reads IETLLCIISYTMVVLSSVQNA. Topologically, residues 104–133 are cytoplasmic; sequence SRHFRTLHDIAKIDEYLLANGFRETYSCRN. A helical transmembrane segment spans residues 134–154; that stretch reads LTILVTSAAGGVLAVAFYYIH. The Extracellular portion of the chain corresponds to 155–164; it reads YRSGIGAKRQ. A helical membrane pass occupies residues 165 to 185; the sequence is IILLLIYFLQLLYSTLLALYL. The Cytoplasmic segment spans residues 186–236; it reads RTLMMNLAQRIGFLNQKLDTFNLQDCGHMENWRELSNLIEVLCKFRYITEN. Residues 237–257 form a helical membrane-spanning segment; sequence INCVAGVSLLFYFGFSFYTVT. Asn258 carries an N-linked (GlcNAc...) asparagine glycan. Topologically, residues 258 to 281 are extracellular; sequence NQSYLAFATLTAGSLSSKTEVADT. A helical membrane pass occupies residues 282–302; it reads IGLSCIWVLAETITMIVICSA. Over 303-352 the chain is Cytoplasmic; it reads CDGLASEVNGTAQILARIYGKSKQFQNLIDKFLTKSIKQDLQFTAYGFFS. The helical transmembrane segment at 353-373 threads the bilayer; it reads IDNSTLFKIFSAVTTYLVILI. At 374–389 the chain is on the extracellular side; it reads QFKQLEDSKVEDISQA.

Belongs to the insect chemoreceptor superfamily. Gustatory receptor (GR) family. Gr21a subfamily. In terms of tissue distribution, expressed in chemosensory neurons of about 20 male-specific gustatory bristles in the forelegs. No expression is seen in the mechanosensory neurons. In larvae, expressed in the ventral pharyngeal sense organ.

It is found in the cell membrane. In terms of biological role, dsx-dependent essential component of pheromone-driven courtship behavior. Recognizes a female pheromone involved in the second step (tapping step) of the courtship display which is essential for efficient execution of the entire courtship sequence and timely mating. Required for detection of the male sex pheromone CH503 which is transferred from males to females during mating and inhibits courtship behavior by other males. Gr68a-expressing neurons in the male foreleg relay signals to the suboesophageal zone (SEZ) and courtship suppression is mediated by the release of the neuropeptide tachykinin from a cluster of 8-10 neurons in the SEZ. The chain is Gustatory receptor 68a (Gr68a) from Drosophila melanogaster (Fruit fly).